Here is a 184-residue protein sequence, read N- to C-terminus: Ribosome-recycling factor (184 aa).

It belongs to the RRF family.

The protein resides in the cytoplasm. Responsible for the release of ribosomes from messenger RNA at the termination of protein biosynthesis. May increase the efficiency of translation by recycling ribosomes from one round of translation to another. This Thermoanaerobacter pseudethanolicus (strain ATCC 33223 / 39E) (Clostridium thermohydrosulfuricum) protein is Ribosome-recycling factor.